Consider the following 373-residue polypeptide: MRNDLVLEDTTLRDGEQTPGVAFSKETKTAILNALIEAGVTSIEIGIPAMGGEELDFIKSVVDRQDEARLVVWHRGVREDVERSLDLGFTSVHVGLPTSAGHLKASVRKDRTWLLATARDMVKMAKDRGAFVSISAEDIARTEISFLQEYAGVVAEAGADRLRLSDTVGLLGPEAYGERVAAVLSAADIDVQCHAHNDFGLATANTLAGLKAGARYFHVTVNAIGERAGMADLAQVVVALKKLYDRDLGIDLTKLKKVSRLVAEAAGHQVLPWQPITGDNVFAHESGIHANGMFRDTSSFEPFPPEHVGGERRYVLGKHSGRALVAWALEQEGITPREELLPHCLEEVRALSIRIGGAVSHEQLVEIYNKAAA.

One can recognise a Pyruvate carboxyltransferase domain in the interval 5–256; that stretch reads LVLEDTTLRD…DLGIDLTKLK (252 aa).

Belongs to the alpha-IPM synthase/homocitrate synthase family.

The enzyme catalyses 3-phosphonopyruvate + acetyl-CoA + H2O = (R)-2-(phosphonomethyl)malate + CoA + H(+). The protein operates within antibiotic biosynthesis. Acyltransferase involved in the biosynthesis of the phosphonate antibiotic FR-900098, a potent antimalarial agent that acts as an inhibitor of 1-deoxy-D-xylulose 5-phosphate reductoisomerase (DXR), the first enzyme in the nonmevalonate pathway for isoprenoid biosynthesis. Catalyzes the condensation between acetyl-CoA and phosphonopyruvate to yield (R)-2-(phosphonomethyl)malate. This is 2-phosphonomethylmalate synthase from Streptomyces rubellomurinus (strain ATCC 31215).